We begin with the raw amino-acid sequence, 557 residues long: Dihydroxy-acid dehydratase (557 aa).

Cys-49 lines the [2Fe-2S] cluster pocket. Asp-81 is a binding site for Mg(2+). Cys-122 contributes to the [2Fe-2S] cluster binding site. 2 residues coordinate Mg(2+): Asp-123 and Lys-124. Lys-124 bears the N6-carboxylysine mark. Cys-194 contacts [2Fe-2S] cluster. Position 446 (Glu-446) interacts with Mg(2+). Ser-472 serves as the catalytic Proton acceptor.

Belongs to the IlvD/Edd family. Homodimer. [2Fe-2S] cluster is required as a cofactor. Requires Mg(2+) as cofactor.

The enzyme catalyses (2R)-2,3-dihydroxy-3-methylbutanoate = 3-methyl-2-oxobutanoate + H2O. The catalysed reaction is (2R,3R)-2,3-dihydroxy-3-methylpentanoate = (S)-3-methyl-2-oxopentanoate + H2O. It functions in the pathway amino-acid biosynthesis; L-isoleucine biosynthesis; L-isoleucine from 2-oxobutanoate: step 3/4. Its pathway is amino-acid biosynthesis; L-valine biosynthesis; L-valine from pyruvate: step 3/4. In terms of biological role, functions in the biosynthesis of branched-chain amino acids. Catalyzes the dehydration of (2R,3R)-2,3-dihydroxy-3-methylpentanoate (2,3-dihydroxy-3-methylvalerate) into 2-oxo-3-methylpentanoate (2-oxo-3-methylvalerate) and of (2R)-2,3-dihydroxy-3-methylbutanoate (2,3-dihydroxyisovalerate) into 2-oxo-3-methylbutanoate (2-oxoisovalerate), the penultimate precursor to L-isoleucine and L-valine, respectively. The protein is Dihydroxy-acid dehydratase of Prochlorococcus marinus (strain MIT 9215).